The primary structure comprises 390 residues: 4-O-beta-D-mannosyl-D-glucose phosphorylase (390 aa).

The protein belongs to the glycosyl hydrolase 130 family.

It carries out the reaction 4-O-beta-D-mannopyranosyl-D-glucopyranose + phosphate = alpha-D-mannose 1-phosphate + D-glucose. In terms of biological role, converts 4-O-beta-D-mannopyranosyl-D-glucopyranose (Man-Glc) to mannose 1-phosphate (Man1P) and glucose. Involved in a mannan catabolic pathway which feeds into glycolysis. The protein is 4-O-beta-D-mannosyl-D-glucose phosphorylase of Bacteroides fragilis (strain ATCC 25285 / DSM 2151 / CCUG 4856 / JCM 11019 / LMG 10263 / NCTC 9343 / Onslow / VPI 2553 / EN-2).